Consider the following 346-residue polypeptide: UPF0324 membrane protein FN0533 (346 aa).

The next 10 membrane-spanning stretches (helical) occupy residues leucine 5–glycine 22, leucine 27–alanine 49, valine 62–serine 81, serine 86–isoleucine 108, valine 115–isoleucine 137, alanine 147–leucine 169, leucine 216–asparagine 233, isoleucine 248–isoleucine 270, isoleucine 283–isoleucine 305, and isoleucine 315–isoleucine 337.

It belongs to the UPF0324 family.

The protein localises to the cell membrane. The polypeptide is UPF0324 membrane protein FN0533 (Fusobacterium nucleatum subsp. nucleatum (strain ATCC 25586 / DSM 15643 / BCRC 10681 / CIP 101130 / JCM 8532 / KCTC 2640 / LMG 13131 / VPI 4355)).